We begin with the raw amino-acid sequence, 275 residues long: Phosphite transport system permease protein PtxC (275 aa).

The next 5 helical transmembrane spans lie at 30–50 (LGQVAIVFGVVLLACWYVGLL), 88–108 (LAMSIAGTAIAVVFSLVVAFV), 136–156 (LIMGIIFVAAVGFGALPGVLA), 221–241 (ASTVMGMVGAGGIGFELMGSL), and 249–269 (VAAILLVILAMVTLVDAFSGV). The ABC transmembrane type-1 domain maps to 84–267 (LIDTLAMSIA…AMVTLVDAFS (184 aa)).

Belongs to the binding-protein-dependent transport system permease family.

The protein resides in the cell inner membrane. Probably forms part of a binding-protein-dependent phosphite transporter. Probably responsible for the translocation of the substrate across the membrane. This is Phosphite transport system permease protein PtxC (ptxC) from Stutzerimonas stutzeri (Pseudomonas stutzeri).